Reading from the N-terminus, the 649-residue chain is Threonine--tRNA ligase (649 aa).

The region spanning 1 to 60 (MHVVLPDGKQLELPMGATALDAASAIGPRLAQDALAATANGELVDLMTPLPDGASITLIT) is the TGS domain. The catalytic stretch occupies residues 248-544 (DHRKLGRELE…LIEHYAGDFP (297 aa)). Positions 341, 392, and 521 each coordinate Zn(2+).

The protein belongs to the class-II aminoacyl-tRNA synthetase family. In terms of assembly, homodimer. The cofactor is Zn(2+).

Its subcellular location is the cytoplasm. The enzyme catalyses tRNA(Thr) + L-threonine + ATP = L-threonyl-tRNA(Thr) + AMP + diphosphate + H(+). Its function is as follows. Catalyzes the attachment of threonine to tRNA(Thr) in a two-step reaction: L-threonine is first activated by ATP to form Thr-AMP and then transferred to the acceptor end of tRNA(Thr). Also edits incorrectly charged L-seryl-tRNA(Thr). The protein is Threonine--tRNA ligase of Deinococcus deserti (strain DSM 17065 / CIP 109153 / LMG 22923 / VCD115).